Consider the following 201-residue polypeptide: Methylated-DNA--protein-cysteine methyltransferase (201 aa).

DNA is bound by residues Y131, G132, and R146. C163 serves as the catalytic Nucleophile; methyl group acceptor.

It belongs to the MGMT family.

The protein localises to the nucleus. The enzyme catalyses a 6-O-methyl-2'-deoxyguanosine in DNA + L-cysteinyl-[protein] = S-methyl-L-cysteinyl-[protein] + a 2'-deoxyguanosine in DNA. It carries out the reaction a 4-O-methyl-thymidine in DNA + L-cysteinyl-[protein] = a thymidine in DNA + S-methyl-L-cysteinyl-[protein]. Its function is as follows. Involved in the cellular defense against the biological effects of O6-methylguanine (O6-MeG) and O4-methylthymine (O4-MeT) in DNA. Repairs the methylated nucleobase in DNA by stoichiometrically transferring the methyl group to a cysteine residue in the enzyme. This is a suicide reaction: the enzyme is irreversibly inactivated. In Lodderomyces elongisporus (strain ATCC 11503 / CBS 2605 / JCM 1781 / NBRC 1676 / NRRL YB-4239) (Yeast), this protein is Methylated-DNA--protein-cysteine methyltransferase (MGT1).